The primary structure comprises 554 residues: Formate--tetrahydrofolate ligase (554 aa).

64–71 is an ATP binding site; that stretch reads TPAGEGKS.

It belongs to the formate--tetrahydrofolate ligase family.

It carries out the reaction (6S)-5,6,7,8-tetrahydrofolate + formate + ATP = (6R)-10-formyltetrahydrofolate + ADP + phosphate. The protein operates within one-carbon metabolism; tetrahydrofolate interconversion. This Leuconostoc citreum (strain KM20) protein is Formate--tetrahydrofolate ligase.